Reading from the N-terminus, the 170-residue chain is Peptide methionine sulfoxide reductase MsrA (170 aa).

The active site involves Cys13.

Belongs to the MsrA Met sulfoxide reductase family.

It catalyses the reaction L-methionyl-[protein] + [thioredoxin]-disulfide + H2O = L-methionyl-(S)-S-oxide-[protein] + [thioredoxin]-dithiol. The enzyme catalyses [thioredoxin]-disulfide + L-methionine + H2O = L-methionine (S)-S-oxide + [thioredoxin]-dithiol. In terms of biological role, has an important function as a repair enzyme for proteins that have been inactivated by oxidation. Catalyzes the reversible oxidation-reduction of methionine sulfoxide in proteins to methionine. This is Peptide methionine sulfoxide reductase MsrA from Nocardia farcinica (strain IFM 10152).